The primary structure comprises 196 residues: GTP cyclohydrolase-2 (196 aa).

49–53 is a GTP binding site; sequence RVHSE. Zn(2+) is bound by residues Cys-54, Cys-65, and Cys-67. Residues Gln-70, 92–94, and Thr-114 contribute to the GTP site; that span reads EGR. The active-site Proton acceptor is Asp-126. The Nucleophile role is filled by Arg-128. Positions 149 and 154 each coordinate GTP.

This sequence belongs to the GTP cyclohydrolase II family. In terms of assembly, homodimer. It depends on Zn(2+) as a cofactor.

It carries out the reaction GTP + 4 H2O = 2,5-diamino-6-hydroxy-4-(5-phosphoribosylamino)-pyrimidine + formate + 2 phosphate + 3 H(+). Its pathway is cofactor biosynthesis; riboflavin biosynthesis; 5-amino-6-(D-ribitylamino)uracil from GTP: step 1/4. Catalyzes the conversion of GTP to 2,5-diamino-6-ribosylamino-4(3H)-pyrimidinone 5'-phosphate (DARP), formate and pyrophosphate. This is GTP cyclohydrolase-2 from Yersinia pestis.